Reading from the N-terminus, the 262-residue chain is Late embryogenesis abundant protein 31 (262 aa).

Positions 6–10 match the Nuclear localization signal (NLS) motif; it reads QPKRP. SMP domains are found at residues 14 to 68, 136 to 192, and 201 to 260; these read VTYG…ANKR, ITIG…NHNA, and IKLI…NERA.

Belongs to the LEA type SMP family. In terms of tissue distribution, embryo specific, only in dry mature seeds.

The protein resides in the nucleus. Its subcellular location is the nucleolus. The protein localises to the cytoplasm. LEA proteins are late embryonic proteins abundant in higher plant seed embryos. The function of those proteins is not known. Promotes germination rate. Enhances cation toxicity (e.g. lithium ion) and osmotic stress (e.g. NaCl and sorbitol) tolerance during germination and in seedlings. The polypeptide is Late embryogenesis abundant protein 31 (Arabidopsis thaliana (Mouse-ear cress)).